The following is a 111-amino-acid chain: uncharacterized protein (111 aa).

Residues 3–29 adopt a coiled-coil conformation; that stretch reads RKITSYKTSLQGLREENEDVELMNLNL. In terms of domain architecture, PPM-type phosphatase spans 6-111; sequence TSYKTSLQGL…TWWMYCSSYY (106 aa).

This is an uncharacterized protein from Acanthamoeba polyphaga mimivirus (APMV).